The sequence spans 298 residues: MESANTLCPGRKCKGGVLAHLERLEAQTNISNRKSEEPAVRKKESSLRTKIRELRQQRDKLRAEVKQWGARVKEPPAKEDPSRTVISEQEVLEREWRNVDAILEAYRFTGLSGKLTSRGVCMCISTAFEGNLLDSYFVDLVIEKPLRIHHHSVPVFIPLEKIAAAHLQTDVQRFLFRLWEYLNAYAGRKYQADQLESDFCDVLTGPLQRNALCNLLSFTYKVEQRCQTFSFSARLLYEDPTAALPTNVTVTRPGVEASSPPWEEHRASHQMLFRTKPLHKVFASFSKETEKLHLNLVS.

Residues 29-49 (NISNRKSEEPAVRKKESSLRT) are disordered. Positions 33–49 (RKSEEPAVRKKESSLRT) are enriched in basic and acidic residues. Position 35 is a phosphoserine (serine 35). The stretch at 39-74 (AVRKKESSLRTKIRELRQQRDKLRAEVKQWGARVKE) forms a coiled coil.

It belongs to the CENP-O/MCM21 family. As to quaternary structure, component of the CENPA-CAD complex, composed of CENPI, CENPK, CENPL, CENPO, CENPP, CENPQ, CENPR and CENPS. The CENPA-CAD complex interacts with the CENPA-NAC complex, at least composed of CENPA, CENPC, CENPH, CENPM, CENPN, CENPT and CENPU.

The protein localises to the nucleus. It is found in the chromosome. The protein resides in the centromere. It localises to the kinetochore. Component of the CENPA-CAD (nucleosome distal) complex, a complex recruited to centromeres which is involved in assembly of kinetochore proteins, mitotic progression and chromosome segregation. May be involved in incorporation of newly synthesized CENPA into centromeres via its interaction with the CENPA-NAC complex. Modulates the kinetochore-bound levels of NDC80 complex. The polypeptide is Centromere protein O (Cenpo) (Mus musculus (Mouse)).